A 397-amino-acid chain; its full sequence is N-acetyllactosaminide beta-1,3-N-acetylglucosaminyltransferase 2 (397 aa).

Residues 1 to 7 lie on the Cytoplasmic side of the membrane; sequence MSVGRRR. Residues 8-28 form a helical; Signal-anchor for type II membrane protein membrane-spanning segment; sequence IKLLGILMMANVFIYFIMEVS. Residues 29-397 lie on the Lumenal side of the membrane; the sequence is KSSSQEKNGK…SQLQSAHLKC (369 aa). Asn-79, Asn-89, Asn-127, Asn-173, and Asn-219 each carry an N-linked (GlcNAc...) asparagine glycan.

Belongs to the glycosyltransferase 31 family. Interacts with B3GNT8; this interaction greatly increases B3GNT2 catalytic activity, independently of B3GNT8 enzymatic activity. The cofactor is Mn(2+). Ubiquitous.

It localises to the golgi apparatus membrane. It catalyses the reaction a beta-D-galactosyl-(1-&gt;4)-N-acetyl-beta-D-glucosaminyl derivative + UDP-N-acetyl-alpha-D-glucosamine = an N-acetyl-beta-D-glucosaminyl-(1-&gt;3)-beta-D-galactosyl-(1-&gt;4)-N-acetyl-beta-D-glucosaminyl derivative + UDP + H(+). It functions in the pathway protein modification; protein glycosylation. Functionally, beta-1,3-N-acetylglucosaminyltransferase involved in the synthesis of poly-N-acetyllactosamine. Catalyzes the initiation and elongation of poly-N-acetyllactosamine chains. Shows a marked preference for Gal(beta1-4)Glc(NAc)-based acceptors. Probably constitutes the main polylactosamine synthase. The polypeptide is N-acetyllactosaminide beta-1,3-N-acetylglucosaminyltransferase 2 (B3GNT2) (Homo sapiens (Human)).